Reading from the N-terminus, the 350-residue chain is Enoyl-[acyl-carrier-protein] reductase, mitochondrial (350 aa).

The N-terminal 14 residues, 1-14 (MNSTRNIISLVRRY), are a transit peptide targeting the mitochondrion. The Proton donor role is filled by Tyr-69. NADP(+) contacts are provided by residues Asn-143, 169-172 (NSMV), 192-194 (RDG), 261-264 (YGGM), 286-288 (FWL), and Lys-343.

It belongs to the zinc-containing alcohol dehydrogenase family. Quinone oxidoreductase subfamily. As to quaternary structure, homodimer.

Its subcellular location is the mitochondrion. It catalyses the reaction a 2,3-saturated acyl-[ACP] + NADP(+) = a (2E)-enoyl-[ACP] + NADPH + H(+). Catalyzes the NADPH-dependent reduction of trans-2-enoyl thioesters in mitochondrial fatty acid synthesis (fatty acid synthesis type II). Fatty acid chain elongation in mitochondria uses acyl carrier protein (ACP) as an acyl group carrier, but the enzyme accepts both ACP and CoA thioesters as substrates in vitro. In Dictyostelium discoideum (Social amoeba), this protein is Enoyl-[acyl-carrier-protein] reductase, mitochondrial (mecr).